The chain runs to 453 residues: Maltotriose-binding protein (453 aa).

The signal sequence occupies residues 1 to 29; that stretch reads MKRGIYAVLLVGVLIFSVVASGCIGGTQT. The segment covering 27–65 has biased composition (low complexity); it reads TQTQTETQTPEKTQTPTTTQPSPTTTTSPTQTTSQTPTE. A disordered region spans residues 27–73; it reads TQTQTETQTPEKTQTPTTTQPSPTTTTSPTQTTSQTPTETETHTQEA.

The protein belongs to the bacterial solute-binding protein 1 family.

Its function is as follows. Involved in an abc transport system for maltotriose. This chain is Maltotriose-binding protein (malE), found in Pyrococcus abyssi (strain GE5 / Orsay).